An 89-amino-acid polypeptide reads, in one-letter code: AADCNGACSPFEMPPCRSTDCRCIPIALFGGFCINPTGLSSVAKMIDEHPNLCQSDDECLKKGSGNFCARYPNHYMDYGWCFDSDSEAL.

A signal peptide is located at residue A1. 3 disulfide bridges follow: C4-C21, C8-C23, and C16-C33. The propeptide occupies L39–I46.

In terms of processing, the C-terminal glycine may be removed from A1b.

Functionally, A1b binds to basic 7S globulin (BG) and stimulates its phosphorylation activity. This is Albumin-1 (LEG) from Vigna radiata var. radiata (Mung bean).